We begin with the raw amino-acid sequence, 224 residues long: Claudin-17 (224 aa).

Residues 1 to 7 (MAFYPLQ) are Cytoplasmic-facing. A helical transmembrane segment spans residues 8–28 (IAGLVLGFLGMVGTLATTLLP). The Extracellular portion of the chain corresponds to 29–81 (QWRVSAFVGSNIIVFERLWEGLWMNCIRQARVRLQCKFYSSLLALPPALETAR). Residues 82 to 102 (ALMCVAVALSLIALLIGICGM) form a helical membrane-spanning segment. The Cytoplasmic segment spans residues 103–124 (KQVQCTGSNERAKAYLLGTSGV). A helical transmembrane segment spans residues 125 to 145 (LFILTGIFVLIPVSWTANIII). Residues 146–164 (RDFYNPAIHIGQKRELGAA) lie on the Extracellular side of the membrane. Residues 165-185 (LFLGWASAAVLFIGGGLLCGF) traverse the membrane as a helical segment. The Cytoplasmic portion of the chain corresponds to 186 to 224 (CCCNRKKQGYRYPVPGYRVPHTDKRRNTTMLSKTSTSYV).

Belongs to the claudin family. In terms of assembly, cannot form tight junction strands on its own. Interacts with OCLN. In the kidney, expressed in the proximal tubule and in the Henle's loop. In the distal convoluted tubule, not expressed in all tubules. Not detected in the collecting duct (at protein level).

The protein localises to the cell junction. It is found in the tight junction. Its subcellular location is the basolateral cell membrane. The catalysed reaction is chloride(in) = chloride(out). The enzyme catalyses hydrogencarbonate(in) = hydrogencarbonate(out). It carries out the reaction bromide(in) = bromide(out). It catalyses the reaction iodide(out) = iodide(in). The catalysed reaction is fluoride(in) = fluoride(out). The enzyme catalyses nitrate(in) = nitrate(out). It carries out the reaction thiocyanate(in) = thiocyanate(out). Its function is as follows. Channel-forming tight junction protein with selectivity for anions, including chloride and hydrogencarbonate, and for solutes smaller than 9 Angstrom in diameter. In the kidney proximal tubule, may be involved in paracellular reabsorption of filtered anions. Does not affect water permeability. In Homo sapiens (Human), this protein is Claudin-17 (CLDN17).